The following is a 479-amino-acid chain: MKKVIVIGVNHAGTSFIRTLLSKSKDFQVNAYDRNTNISFLGCGIALAVSGVVKNTEDLFYSTPEELKAMGANVFMAHDVVGLDLDKKQVIVKDLATGKETVDHYDQLVVASGAWPICMNVENEVTHTQLQFNHTDKYCGNIKNLISCKLYQHALTLIDSFRHDKSIKSVAIVGSGYIGLELAEAAWQCGKQVTVIDMLDKPAGNNFDEEFTNELEKAMKKAGINLMMGSAVKGFIVDADKNVVKGVETDKGRVDADLVIQSIGFRPNTQFVPKDRQFEFNRNGSIKVNEYLQALNHENVYVIGGAAAIYDAASEQYENIDLATNAVKSGLVAAMHMIGSKAVKLESIVGTNALHVFGLNLAATGLTEKRAKMNGFDVGVSIVDDNDRPEFMGTFDKVRFKLIYDKKTLRLLGAQLLSWNTNHSEIIFYIALAVQKKMLISELGLVDVYFLPHYNKPFNFVLAAVLQALGFSYYTPKNK.

Residues 8–12, Asp-33, Cys-43, Val-80, 111–114, Lys-149, and Tyr-177 contribute to the FAD site; these read GVNHA and ASGA. His-11 (proton acceptor) is an active-site residue. Cys-43 (redox-active) is an active-site residue. A Cysteine sulfinic acid (-SO2H) modification is found at Cys-43. Residues 170-185, Asp-197, and Gly-264 contribute to the NAD(+) site; that span reads VAIVGSGYIGLELAEA. FAD is bound by residues 295–305, Leu-322, Ala-323, and Thr-324; that span reads LNHENVYVIGG. Ala-353 contributes to the NAD(+) binding site. Phe-450 is a binding site for FAD.

It belongs to the class-III pyridine nucleotide-disulfide oxidoreductase family. Requires FAD as cofactor.

It carries out the reaction 2 NADH + O2 + 2 H(+) = 2 NAD(+) + 2 H2O. Its function is as follows. Catalyzes the four-electron reduction of molecular oxygen to water. The chain is NADH oxidase (nox) from Mycoplasma pneumoniae (strain ATCC 29342 / M129 / Subtype 1) (Mycoplasmoides pneumoniae).